The primary structure comprises 243 residues: Ornithine decarboxylase antizyme 3 (243 aa).

Ser6, Ser9, and Ser12 each carry phosphoserine.

Belongs to the ODC antizyme family. In terms of assembly, interacts with ODC1 and thereby sterically blocks ODC homodimerization. Interacts with AZIN2; this interaction disrupts the interaction between the antizyme and ODC1. Interacts with GGN. Isoform 2 interacts with PPP1R16A; Modulates PPP1CB activity. Testis-specific. Isoform 2 is expressed in outer dense fibers, fibrous sheath and the connecting piece of sperm.

It is found in the nucleus. It localises to the cytoplasm. The protein localises to the cell projection. The protein resides in the cilium. Its subcellular location is the flagellum. Functionally, ornithine decarboxylase (ODC) antizyme protein that negatively regulates ODC activity and intracellular polyamine biosynthesis and uptake in response to increased intracellular polyamine levels. Binds to ODC monomers, inhibiting the assembly of the functional ODC homodimers. Does not target the ODC monomers for degradation, which allows a protein synthesis-independent restoration of ODC activity. Stabilizes AZIN2 by interfering with its ubiquitination. Involved in the translocation of AZNI2 from ER-Golgi intermediate compartment (ERGIC) to the cytosol. Probably plays a key role in spermatogenesis by regulating the intracellular concentration of polyamines in haploid germ cells. Does not possess antizyme activity. Modulates PPP1CB activity through its interaction with PPP1R16A. The sequence is that of Ornithine decarboxylase antizyme 3 from Rattus norvegicus (Rat).